We begin with the raw amino-acid sequence, 277 residues long: Indole-3-glycerol phosphate synthase (277 aa).

This sequence belongs to the TrpC family.

It carries out the reaction 1-(2-carboxyphenylamino)-1-deoxy-D-ribulose 5-phosphate + H(+) = (1S,2R)-1-C-(indol-3-yl)glycerol 3-phosphate + CO2 + H2O. It participates in amino-acid biosynthesis; L-tryptophan biosynthesis; L-tryptophan from chorismate: step 4/5. This chain is Indole-3-glycerol phosphate synthase, found in Pseudomonas putida (strain ATCC 700007 / DSM 6899 / JCM 31910 / BCRC 17059 / LMG 24140 / F1).